A 314-amino-acid polypeptide reads, in one-letter code: Pathogenicity locus probable regulatory protein HrpR (314 aa).

The region spanning 11 to 239 is the Sigma-54 factor interaction domain; it reads TRWNVTALSA…LKSAANAICP (229 aa). Residues 39–46 and 101–110 contribute to the ATP site; these read GETGTGKD and SNGGTLYLDE. A DNA-binding region (H-T-H motif) is located at residues 281–300; sequence FDAVLEELELPRRTLYHRMK.

In terms of biological role, member of the two-component regulatory system HrpR/HrpS that regulates the activation of the sigma factor hrpL which itself induces the expression of hprD as well as other hrp loci which are involved in plant pathogenicity, hrmA and avr genes. Probably interacts with sigma-54. The protein is Pathogenicity locus probable regulatory protein HrpR (hrpR) of Pseudomonas syringae pv. syringae.